The primary structure comprises 365 residues: Eukaryotic translation initiation factor 3 subunit H (365 aa).

Residues Val-11–Phe-160 form the MPN domain.

The protein belongs to the eIF-3 subunit H family. In terms of assembly, component of the eukaryotic translation initiation factor 3 (eIF-3) complex.

It localises to the cytoplasm. In terms of biological role, component of the eukaryotic translation initiation factor 3 (eIF-3) complex, which is involved in protein synthesis of a specialized repertoire of mRNAs and, together with other initiation factors, stimulates binding of mRNA and methionyl-tRNAi to the 40S ribosome. The eIF-3 complex specifically targets and initiates translation of a subset of mRNAs involved in cell proliferation. In Aspergillus oryzae (strain ATCC 42149 / RIB 40) (Yellow koji mold), this protein is Eukaryotic translation initiation factor 3 subunit H.